The sequence spans 667 residues: Acetoacetyl-CoA synthetase (667 aa).

Belongs to the ATP-dependent AMP-binding enzyme family.

It localises to the cytoplasm. The protein resides in the cytosol. The enzyme catalyses acetoacetate + ATP + CoA = acetoacetyl-CoA + AMP + diphosphate. Converts acetoacetate to acetoacetyl-CoA in the cytosol. Ketone body-utilizing enzyme, responsible for the synthesis of cholesterol and fatty acids. The chain is Acetoacetyl-CoA synthetase (AACS) from Gallus gallus (Chicken).